Reading from the N-terminus, the 446-residue chain is Glucarate dehydratase-related protein (446 aa).

Histidine 31, threonine 104, tyrosine 149, and lysine 204 together coordinate substrate. Residue lysine 206 is the Proton acceptor of the active site. Mg(2+) contacts are provided by aspartate 234, glutamate 265, and asparagine 288. 234–236 (DPN) lines the substrate pocket. Residues asparagine 288, 338-340 (HSN), histidine 367, and arginine 421 contribute to the substrate site. The active-site Proton acceptor is the histidine 338.

This sequence belongs to the mandelate racemase/muconate lactonizing enzyme family. GlucD subfamily. It depends on a divalent metal cation as a cofactor.

Does not seem to have an in-vivo activity on glucarate or idarate. Its real substrate is unknown. The sequence is that of Glucarate dehydratase-related protein (gudX) from Escherichia coli (strain K12).